A 130-amino-acid polypeptide reads, in one-letter code: Ornithine decarboxylase antizyme (130 aa).

A compositionally biased stretch (basic and acidic residues) spans 1–14 (SDVPVHHRTDHDRA). Positions 1 to 56 (SDVPVHHRTDHDRASLLTGSSRKSSVDSAGGSLFEASSRASSPSSSSSSECSDTES) are disordered. Polar residues predominate over residues 17–27 (LTGSSRKSSVD). The segment covering 32–51 (SLFEASSRASSPSSSSSSEC) has biased composition (low complexity).

This sequence belongs to the ODC antizyme family. In terms of assembly, interacts with ODC1 and thereby sterically blocks ODC homodimerization.

Functionally, ornithine decarboxylase (ODC) antizyme protein that negatively regulates ODC activity and intracellular polyamine biosynthesis and uptake in response to increased intracellular polyamine levels. Binds to ODC monomers, inhibiting the assembly of the functional ODC homodimer, and targets the monomers for ubiquitin-independent proteolytic destruction by the 26S proteasome. In Drosophila virilis (Fruit fly), this protein is Ornithine decarboxylase antizyme (Oda).